Reading from the N-terminus, the 245-residue chain is Lytic switch protein BZLF1 (245 aa).

Residues 1-167 (MMDPNSTSED…RTRKPLQPES (167 aa)) are transactivation. Phosphothreonine is present on residues Thr-14 and Thr-159. The interval 145-167 (GAPQPAPAAAPARRTRKPLQPES) is disordered. The Bipartite nuclear localization signal motif lies at 157-194 (RRTRKPLQPESLEECDSELEIKRYKNRVASRKCRAKFK). 3 positions are modified to phosphoserine: Ser-167, Ser-173, and Ser-186. Positions 178-195 (KRYKNRVASRKCRAKFKH) are basic motif. A bZIP domain is found at 178-228 (KRYKNRVASRKCRAKFKHLLQHYREVASAKSSENDRLRLLLKQMCPSLDVD). Positions 196-228 (LLQHYREVASAKSSENDRLRLLLKQMCPSLDVD) are leucine-zipper. Residues 229–245 (SIIPRTPDVLHEDLLNF) form an accessory activation domain region.

This sequence belongs to the bZIP family. In terms of assembly, homodimer. Interacts (via b-ZIP domain) with the DNA polymerase processivity factor BMRF1 (via N-terminus); this interaction may inhibit BZLF1-induced transcription of the BMRF1 promoter. Interacts with human UBN1, CRTC2 and RACK1. Interacts (via N-terminus) with human PAX5 (via N-terminus); this interaction inhibits BZLF1-mediated lytic viral reactivation. Interacts (via leucine-zipper domain) with host CEBPA; this interaction induces G1 host cell cycle arrest. Interacts (via C-terminus) with host TP53BP1 (via C-terminus); this interaction is involved in the activation of the viral lytic cycle. Interacts with host chromatin-remodeling ATPase INO80; this interaction participates to the activation of early lytic viral genes by BZLF1. Interacts with host regulator of chromatin SMARCA5/hSNF2H; this interaction participates to the activation of early lytic viral genes by BZLF1. Interacts with host PLSCR1/Phospholipid scramblase 1; this interaction negatively regulates the transcriptional regulatory activity of BZLF1 by preventing the formation of the BZLF1-CBP complex.

The protein localises to the host nucleus. Its function is as follows. Transcription factor that acts as a molecular switch to induce the transition from the latent to the lytic or productive phase of the virus cycle. Mediates the switch from the latent to the lytic cycle of infection in cells containing a highly methylated viral genome. Probably binds to silenced chromatin and recruits host chromatin-remodeling enzymes. Regulates this switch by binding to 2 types of ZEBRA response elements (ZREs): the CpG-free AP-1 like elements (latency) and the methylated CpG-containing elements (lytic replication). Activates preferentially the methylated forms of the viral lytic R (BRLF1) and Na (BRRF1) gene promoters, the latters being the first genes activated during Z-mediated reactivation in latently infected cells. BZLF1 and BRLF1 act together to trigger lytic replication. Also binds the lytic origin of replication, oriLyt. Induces G1 cell cycle arrest by stabilizing the host CCAAT/enhancer binding protein CEBPA. This function is important because the lytic cycle preferentially takes place in host cells arrested in G1. This is Lytic switch protein BZLF1 from Homo sapiens (Human).